A 224-amino-acid chain; its full sequence is MTKQINSQQIAIDGPAGSGKSTVAKLVAQRLGFDYLSTGKIFRAFYYLIKENNWSIDQLISNFNKYECAFNGDQVVINKENISQLLNDPTISKGASEIAQDPKIRAYALSLQQDYANKKPVVMDGRDITSVVLPNAILKVFLTASAQQRAIRRIKQLNLELNKATLEQFTNEIQQRDDNDTNRKLAPLMIVKDAIVIDSDQLSIEQVVDKIISLYKQRLGVNYA.

14-22 (GPAGSGKST) lines the ATP pocket.

It belongs to the cytidylate kinase family. Type 1 subfamily.

It is found in the cytoplasm. It carries out the reaction CMP + ATP = CDP + ADP. It catalyses the reaction dCMP + ATP = dCDP + ADP. The chain is Cytidylate kinase from Mycoplasmoides gallisepticum (strain R(low / passage 15 / clone 2)) (Mycoplasma gallisepticum).